Consider the following 89-residue polypeptide: Antimicrobial peptide Ar-AMP (89 aa).

The first 25 residues, 1 to 25 (MVNMKSVALIVIVMMAFMMVDPSMG), serve as a signal peptide directing secretion. Positions 26–68 (AGECVQGRCPSGMCCSQFGYCGRGPKYCGRASTTVDHQADAAA) constitute a Chitin-binding type-1 domain. 3 disulfides stabilise this stretch: C29–C40, C34–C46, and C39–C53. The propeptide at 56 to 89 (ASTTVDHQADAAAAAATKTANNPTDAKLAGAGSP) is removed in mature form.

Its function is as follows. Chitin-binding protein that inhibits the growth of the fungal pathogens B.cinerea, F.culmorum, H.sativum and A.consortiale, but not that of R.solani. Induces morphological changes in the fungal pathogens F.culmorum, H.sativum and R.solani, but not in A.consortiale and B.cinerea. Has antibacterial activity against the Gram-positive bacterium B.subtilis, but lacks antibacterial activity against the Gram-negative bacterium E.coli. The protein is Antimicrobial peptide Ar-AMP of Amaranthus retroflexus (Redroot amaranth).